The primary structure comprises 692 residues: Elongation factor G (692 aa).

The tr-type G domain occupies 8 to 282 (DKTRNIGIMA…AVLDYLPAPT (275 aa)). GTP is bound by residues 17 to 24 (AHIDAGKT), 81 to 85 (DTPGH), and 135 to 138 (NKMD).

This sequence belongs to the TRAFAC class translation factor GTPase superfamily. Classic translation factor GTPase family. EF-G/EF-2 subfamily.

It is found in the cytoplasm. Catalyzes the GTP-dependent ribosomal translocation step during translation elongation. During this step, the ribosome changes from the pre-translocational (PRE) to the post-translocational (POST) state as the newly formed A-site-bound peptidyl-tRNA and P-site-bound deacylated tRNA move to the P and E sites, respectively. Catalyzes the coordinated movement of the two tRNA molecules, the mRNA and conformational changes in the ribosome. This is Elongation factor G from Bacillus pumilus (strain SAFR-032).